The following is a 429-amino-acid chain: Homocysteine synthase (429 aa).

The residue at position 210 (Lys210) is an N6-(pyridoxal phosphate)lysine.

This sequence belongs to the trans-sulfuration enzymes family. As to quaternary structure, homotetramer. The cofactor is pyridoxal 5'-phosphate.

The protein localises to the cytoplasm. It is found in the nucleus. It carries out the reaction O-acetyl-L-homoserine + methanethiol = L-methionine + acetate + H(+). The catalysed reaction is O-acetyl-L-homoserine + hydrogen sulfide = L-homocysteine + acetate. Its pathway is amino-acid biosynthesis; L-methionine biosynthesis via de novo pathway; L-homocysteine from O-acetyl-L-homoserine. Catalyzes the conversion of O-acetyl-L-homoserine (OAH) into homocysteine in the methionine biosynthesis pathway. Can also use O-succinyl-L-homoserine and L-homoserine as substrates. Also has cysteine synthase (O-acetylserine sulfhydrylase) activity in vitro, but in S.pombe, it seems only to be involved in the alternative pathway of methionine biosynthesis under cysteine deficiency conditions. This is Homocysteine synthase from Schizosaccharomyces pombe (strain 972 / ATCC 24843) (Fission yeast).